The primary structure comprises 445 residues: tRNA-2-methylthio-N(6)-dimethylallyladenosine synthase (445 aa).

An MTTase N-terminal domain is found at 9-125 (LKYRILTYGC…LPYLIARAKE (117 aa)). Residues C18, C54, C88, C162, C166, and C169 each contribute to the [4Fe-4S] cluster site. The Radical SAM core domain occupies 148 to 378 (RKPGLSAFVN…NRRQYQIATE (231 aa)). The TRAM domain occupies 381-444 (QELQGSIQEV…TFSLFGEIFN (64 aa)).

This sequence belongs to the methylthiotransferase family. MiaB subfamily. As to quaternary structure, monomer. Requires [4Fe-4S] cluster as cofactor.

It is found in the cytoplasm. It carries out the reaction N(6)-dimethylallyladenosine(37) in tRNA + (sulfur carrier)-SH + AH2 + 2 S-adenosyl-L-methionine = 2-methylsulfanyl-N(6)-dimethylallyladenosine(37) in tRNA + (sulfur carrier)-H + 5'-deoxyadenosine + L-methionine + A + S-adenosyl-L-homocysteine + 2 H(+). In terms of biological role, catalyzes the methylthiolation of N6-(dimethylallyl)adenosine (i(6)A), leading to the formation of 2-methylthio-N6-(dimethylallyl)adenosine (ms(2)i(6)A) at position 37 in tRNAs that read codons beginning with uridine. This chain is tRNA-2-methylthio-N(6)-dimethylallyladenosine synthase, found in Syntrophomonas wolfei subsp. wolfei (strain DSM 2245B / Goettingen).